A 111-amino-acid polypeptide reads, in one-letter code: Large ribosomal subunit protein uL23 (111 aa).

It belongs to the universal ribosomal protein uL23 family. In terms of assembly, part of the 50S ribosomal subunit. Contacts protein L29, and trigger factor when it is bound to the ribosome.

In terms of biological role, one of the early assembly proteins it binds 23S rRNA. One of the proteins that surrounds the polypeptide exit tunnel on the outside of the ribosome. Forms the main docking site for trigger factor binding to the ribosome. This chain is Large ribosomal subunit protein uL23, found in Chlamydia trachomatis serovar A (strain ATCC VR-571B / DSM 19440 / HAR-13).